The following is a 146-amino-acid chain: Globin (146 aa).

An N-acetylalanine modification is found at Ala1. Residues 1 to 146 (ALSAAEAEVV…IIDAMKKAGK (146 aa)) enclose the Globin domain. Position 95 (His95) interacts with heme b.

The protein belongs to the globin family. Monomer.

This is Globin from Dolabella auricularia (Shoulderblade sea cat).